The primary structure comprises 341 residues: Uroporphyrinogen decarboxylase (341 aa).

Residues 23 to 27 (RQAGR), D73, Y147, S202, and H318 each bind substrate.

This sequence belongs to the uroporphyrinogen decarboxylase family. In terms of assembly, homodimer.

Its subcellular location is the cytoplasm. The catalysed reaction is uroporphyrinogen III + 4 H(+) = coproporphyrinogen III + 4 CO2. It participates in porphyrin-containing compound metabolism; protoporphyrin-IX biosynthesis; coproporphyrinogen-III from 5-aminolevulinate: step 4/4. Functionally, catalyzes the decarboxylation of four acetate groups of uroporphyrinogen-III to yield coproporphyrinogen-III. The polypeptide is Uroporphyrinogen decarboxylase (Novosphingobium aromaticivorans (strain ATCC 700278 / DSM 12444 / CCUG 56034 / CIP 105152 / NBRC 16084 / F199)).